The chain runs to 35 residues: PTEN upstream open reading frame MP31 (35 aa).

In terms of assembly, interacts with lactate dehydrogenases LDHA and LDHB; interaction with mitochondrial LDH leads to inhibition of lactate dehydrogenase activity, preventing conversion of lactate to pyruvate. In terms of tissue distribution, detected in brain, kidney and liver (at protein level).

The protein localises to the mitochondrion. Functionally, inhibits lactate dehydrogenase (LDH)-mediated conversion of lactate to pyruvate in mitochondria by competing with mitochondrial LDH for binding to NAD(+). Also inhibits cellular lactate utilization. The chain is PTEN upstream open reading frame MP31 from Mus musculus (Mouse).